The following is a 299-amino-acid chain: Transcription elongation factor A protein 2 (299 aa).

A TFIIS N-terminal domain is found at 6–83 (EEIARIARRL…KSWKKLLDAS (78 aa)). A Glycyl lysine isopeptide (Lys-Gly) (interchain with G-Cter in ubiquitin) cross-link involves residue K58. S60 and S100 each carry phosphoserine. The interval 86-128 (KARERGRGMPLPTSSRDASEAPDPSRKRPELPRAPSTPRITTF) is disordered. The span at 102 to 116 (DASEAPDPSRKRPEL) shows a compositional bias: basic and acidic residues. A TFIIS central domain is found at 138–254 (VRNKCREMLT…EHQMARTGGT (117 aa)). The TFIIS-type zinc finger occupies 257 to 297 (DLFTCGKCRKKNCTYTQVQTRSSDEPMTTFVVCNECGNRWK). Residues C261, C264, C289, and C292 each contribute to the Zn(2+) site.

The protein belongs to the TFS-II family. In terms of assembly, interacts with the basal transcription factor GTF2B. Interacts with REXO1. In terms of tissue distribution, testis and ovary specific.

It is found in the nucleus. Necessary for efficient RNA polymerase II transcription elongation past template-encoded arresting sites. The arresting sites in DNA have the property of trapping a certain fraction of elongating RNA polymerases that pass through, resulting in locked ternary complexes. Cleavage of the nascent transcript by S-II allows the resumption of elongation from the new 3'-terminus. This Homo sapiens (Human) protein is Transcription elongation factor A protein 2 (TCEA2).